The primary structure comprises 305 residues: MVTEFIFLGLSDSQGLQTFLFMLFFVFYGGIVFGNLLIVITVVSDSHLHSPMYFLLANLSLIDLSLSSVTAPKMITDFFSQRKVISFKGCLVQIFLLHFFGGSEMVILIAMGFDRYIAICKPLHYTTIMCGNACVGIMAVAWGIGFLHSVSQLAFAVHLPFCGPNEVDSFYCDLPRVIKLACTDTYRLDIMVIANSGVLTVCSFVLLIISYTIILMTIQHRPLDKSSKALSTLTAHITVVLLFFGPCVFIYAWPFPIKSLDKFLAVFYSVITPLLNPIIYTLRNKDMKTAIRQLRKWDAHSSVKF.

Residues 1–18 lie on the Extracellular side of the membrane; it reads MVTEFIFLGLSDSQGLQT. The chain crosses the membrane as a helical span at residues 19-42; sequence FLFMLFFVFYGGIVFGNLLIVITV. Over 43–50 the chain is Cytoplasmic; that stretch reads VSDSHLHS. Residues 51 to 72 form a helical membrane-spanning segment; sequence PMYFLLANLSLIDLSLSSVTAP. Residues 73 to 93 lie on the Extracellular side of the membrane; it reads KMITDFFSQRKVISFKGCLVQ. Cysteines 90 and 182 form a disulfide. The helical transmembrane segment at 94–113 threads the bilayer; sequence IFLLHFFGGSEMVILIAMGF. The Cytoplasmic portion of the chain corresponds to 114-132; it reads DRYIAICKPLHYTTIMCGN. The chain crosses the membrane as a helical span at residues 133 to 151; the sequence is ACVGIMAVAWGIGFLHSVS. The Extracellular portion of the chain corresponds to 152–188; sequence QLAFAVHLPFCGPNEVDSFYCDLPRVIKLACTDTYRL. The helical transmembrane segment at 189 to 212 threads the bilayer; sequence DIMVIANSGVLTVCSFVLLIISYT. The Cytoplasmic segment spans residues 213–228; it reads IILMTIQHRPLDKSSK. The chain crosses the membrane as a helical span at residues 229-251; the sequence is ALSTLTAHITVVLLFFGPCVFIY. At 252–262 the chain is on the extracellular side; sequence AWPFPIKSLDK. The chain crosses the membrane as a helical span at residues 263–282; it reads FLAVFYSVITPLLNPIIYTL. At 283 to 305 the chain is on the cytoplasmic side; that stretch reads RNKDMKTAIRQLRKWDAHSSVKF.

The protein belongs to the G-protein coupled receptor 1 family.

It is found in the cell membrane. Its function is as follows. Odorant receptor. This is Olfactory receptor 4F17 (OR4F17) from Homo sapiens (Human).